A 150-amino-acid chain; its full sequence is Galectin-2 (150 aa).

In terms of domain architecture, Galectin spans 9–141 (NQVKLQNDFK…FSSPVTVDVH (133 aa)). A carbohydrate is bound by residues His-51, Arg-55, Asn-64, Glu-75, and Arg-77.

In terms of assembly, homotetramer. Oligomerization is required for carbohydrate binding.

The protein localises to the secreted. The protein resides in the extracellular space. Its subcellular location is the extracellular matrix. It localises to the cell wall. It is found in the endomembrane system. Its function is as follows. Binds lactose. May play a role in fruiting body formation. Displays toxicity towards the nematode C.elegans by binding to a specific Gal-beta-1,4-Fuc-alpha-1,6 modification of N-glycan cores on C.elegans intestinal cells. The protein is Galectin-2 (Cgl2) of Coprinopsis cinerea (Inky cap fungus).